A 207-amino-acid polypeptide reads, in one-letter code: MQLGLDFGRVEALVAGVDEVGRGPLCGAVVTAAVILDPERPILGLNDSKKLSEARREALSEEIREKALAWCIARAEVEEIDRLNILHATMLAMRRAVEGLAVTPRLALIDGNRCPKLAVPCAPVIKGDAQVPAIAAASILAKVARDREMLVLDALYPGYGLARHKGYPTAVHLEALARLGPTPIHRRSFAPVRELLDVVSIPCAPTS.

The region spanning 12–201 (ALVAGVDEVG…VRELLDVVSI (190 aa)) is the RNase H type-2 domain. Positions 18, 19, and 110 each coordinate a divalent metal cation.

The protein belongs to the RNase HII family. Mn(2+) is required as a cofactor. The cofactor is Mg(2+).

It localises to the cytoplasm. The enzyme catalyses Endonucleolytic cleavage to 5'-phosphomonoester.. Its function is as follows. Endonuclease that specifically degrades the RNA of RNA-DNA hybrids. This is Ribonuclease HII from Azotobacter vinelandii (strain DJ / ATCC BAA-1303).